Here is an 819-residue protein sequence, read N- to C-terminus: Cadherin-24 (819 aa).

The N-terminal stretch at 1-19 (MWGLVRLLLAWLGGWGCMG) is a signal peptide. Residues 21–44 (LAAPARAWAGSREHPGPALLRTRR) constitute a propeptide that is removed on maturation. The Extracellular portion of the chain corresponds to 45-641 (SWVWNQFFVI…LSAAGLSTGA (597 aa)). 5 consecutive Cadherin domains span residues 46-150 (WVWN…PPIF), 151-259 (PLGP…PPKF), 260-374 (PQSL…PPAF), 375-517 (TQAA…APQL), and 517-630 (LAEP…WPEA). 3 N-linked (GlcNAc...) asparagine glycosylation sites follow: N446, N548, and N563. The chain crosses the membrane as a helical span at residues 642 to 662 (LLAIITCVGALLALVVLFVAL). Residues 663-819 (RRQKQEALMV…LYGAKEPPAP (157 aa)) lie on the Cytoplasmic side of the membrane. The segment at 768–800 (YEGRGSSCGSLSSLGSGSEAGGAPGPAEPLDDW) is disordered. A compositionally biased stretch (low complexity) spans 771 to 784 (RGSSCGSLSSLGSG).

Associates with alpha-, beta- and delta-catenins.

It localises to the cell membrane. Cadherins are calcium-dependent cell adhesion proteins. They preferentially interact with themselves in a homophilic manner in connecting cells; cadherins may thus contribute to the sorting of heterogeneous cell types. Cadherin-24 mediate strong cell-cell adhesion. This is Cadherin-24 (CDH24) from Homo sapiens (Human).